We begin with the raw amino-acid sequence, 160 residues long: 2-C-methyl-D-erythritol 2,4-cyclodiphosphate synthase (160 aa).

The a divalent metal cation site is built by aspartate 9 and histidine 11. 4-CDP-2-C-methyl-D-erythritol 2-phosphate contacts are provided by residues 9 to 11 and 35 to 36; these read DVH and HS. A divalent metal cation is bound at residue histidine 43. Residues 57–59, 62–66, and phenylalanine 140 each bind 4-CDP-2-C-methyl-D-erythritol 2-phosphate; these read DIG and FPDND.

It belongs to the IspF family. Homotrimer. A divalent metal cation serves as cofactor.

The catalysed reaction is 4-CDP-2-C-methyl-D-erythritol 2-phosphate = 2-C-methyl-D-erythritol 2,4-cyclic diphosphate + CMP. It functions in the pathway isoprenoid biosynthesis; isopentenyl diphosphate biosynthesis via DXP pathway; isopentenyl diphosphate from 1-deoxy-D-xylulose 5-phosphate: step 4/6. Functionally, involved in the biosynthesis of isopentenyl diphosphate (IPP) and dimethylallyl diphosphate (DMAPP), two major building blocks of isoprenoid compounds. Catalyzes the conversion of 4-diphosphocytidyl-2-C-methyl-D-erythritol 2-phosphate (CDP-ME2P) to 2-C-methyl-D-erythritol 2,4-cyclodiphosphate (ME-CPP) with a corresponding release of cytidine 5-monophosphate (CMP). This chain is 2-C-methyl-D-erythritol 2,4-cyclodiphosphate synthase, found in Fusobacterium nucleatum subsp. nucleatum (strain ATCC 25586 / DSM 15643 / BCRC 10681 / CIP 101130 / JCM 8532 / KCTC 2640 / LMG 13131 / VPI 4355).